The following is a 598-amino-acid chain: Trichothecene efflux pump TRI12 (598 aa).

Residues 42 to 62 traverse the membrane as a helical segment; it reads IVASFAAFSMNVVATYFVLQA. Residue asparagine 79 is glycosylated (N-linked (GlcNAc...) asparagine). The next 2 helical transmembrane spans lie at 109-129 and 135-155; these read PFVI…CTAT and LAAM…PLFI. Asparagine 161 carries N-linked (GlcNAc...) asparagine glycosylation. Transmembrane regions (helical) follow at residues 165–185, 197–217, 241–261, 273–293, 312–332, 356–376, 381–401, 409–429, 442–462, and 533–553; these read FLGL…SPYL, WIFY…IIWY, WIGI…VSWG, VIGL…YEVY, FVCI…LVIM, ATAS…FHLV, WQIL…SSIN, IALS…TMLL, AFAV…AAFI, and ANVY…SLCM. The segment at 579–598 is disordered; it reads LEGNSESQPSPIILSMADKE.

The protein belongs to the major facilitator superfamily.

It is found in the cell membrane. Functionally, efflux pump that provides the dual role of trichothecene export and self-protection by allowing the fungus to evade the harmful effect of its own trichothecene production. This is Trichothecene efflux pump TRI12 from Fusarium sporotrichioides.